The following is a 358-amino-acid chain: Aurora kinase (358 aa).

A disordered region spans residues 1–49 (MENKATLARNIGEKRVSPRSKVNGTGKSWRISYSPQRMDGVSSGRNVSK). Positions 20 to 35 (SKVNGTGKSWRISYSP) are enriched in polar residues. In terms of domain architecture, Protein kinase spans 100 to 358 (FEVGRKLGKG…PWILKNKPFW (259 aa)). Residues 106–114 (LGKGKFGKV) and K129 each bind ATP. D223 acts as the Proton acceptor in catalysis.

It belongs to the protein kinase superfamily. Ser/Thr protein kinase family. Aurora subfamily.

Its subcellular location is the nucleus. It is found in the cytoplasm. The protein localises to the cytoskeleton. The protein resides in the spindle. It localises to the chromosome. Its subcellular location is the centromere. It is found in the kinetochore. The catalysed reaction is L-seryl-[protein] + ATP = O-phospho-L-seryl-[protein] + ADP + H(+). The enzyme catalyses L-threonyl-[protein] + ATP = O-phospho-L-threonyl-[protein] + ADP + H(+). Component of the chromosomal passenger complex (CPC), a complex that acts as a key regulator of chromosome segregation and cytokinesis. Has a role in error-correction of aberrent kinetochore-microtubule attachments to ensure that sister kinetochores become bioriented and connect to opposite poles by promoting spindle assembly checkpoint signaling. The chain is Aurora kinase (IPL1) from Candida glabrata (strain ATCC 2001 / BCRC 20586 / JCM 3761 / NBRC 0622 / NRRL Y-65 / CBS 138) (Yeast).